A 291-amino-acid chain; its full sequence is Small ribosomal subunit biogenesis GTPase RsgA (291 aa).

The region spanning 63–221 (KNELKRPPVS…IADTPGFSAL (159 aa)) is the CP-type G domain. GTP is bound by residues 112 to 115 (TKKD) and 164 to 172 (GQSGVGKST). Cys245, Cys250, His252, and Cys258 together coordinate Zn(2+).

The protein belongs to the TRAFAC class YlqF/YawG GTPase family. RsgA subfamily. In terms of assembly, monomer. Associates with 30S ribosomal subunit, binds 16S rRNA. The cofactor is Zn(2+).

Its subcellular location is the cytoplasm. Functionally, one of several proteins that assist in the late maturation steps of the functional core of the 30S ribosomal subunit. Helps release RbfA from mature subunits. May play a role in the assembly of ribosomal proteins into the subunit. Circularly permuted GTPase that catalyzes slow GTP hydrolysis, GTPase activity is stimulated by the 30S ribosomal subunit. This is Small ribosomal subunit biogenesis GTPase RsgA from Staphylococcus aureus (strain Mu50 / ATCC 700699).